The sequence spans 501 residues: MSNAEQQAPVQQDENQLIAERRAKLAEWRKTGKAFPNDFQRENTAAKVLEGYGEKTAEELEGLPIEVKVAGRLMLKRVMGKASFATIQDLSGRIQIYITRDRVGEEVYADFKTWDLGDIIGVTGSLMKTKTGELSIQAAEIRLLTKSLRPLPDKFHGLADQEMKYRQRYVDLIMNEETRFTFRARSAIVASIRNYMTGHGFMEVETPMMHPIPGGASAKPFVTHHNALDMQQFLRIAPELYLKRLVVGGFEKVFEINRNFRNEGLSPRHNPEFTMMEFYEAYANYHTLMDFTEGLLRHAAREALGKEVFVYQGRELDLSKPFHRLTINQAIQRQHPEFSDAELADPEFLKAKIKHFGEPLKPGGLGSLQLQLFEACAEAHCWEPTFIIDYPVEVSPLARASDTNPEITERFELFIVGREIANGFSELNDAEDQAARFQEQMKAKDAGDEEAMYYDADFIRALEYGLPPTGGCGIGIDRLIMLLTDAAAIRDVILFPSMRPE.

Mg(2+) is bound by residues Glu412 and Glu419.

It belongs to the class-II aminoacyl-tRNA synthetase family. In terms of assembly, homodimer. The cofactor is Mg(2+).

The protein resides in the cytoplasm. The enzyme catalyses tRNA(Lys) + L-lysine + ATP = L-lysyl-tRNA(Lys) + AMP + diphosphate. This is Lysine--tRNA ligase from Dechloromonas aromatica (strain RCB).